The chain runs to 93 residues: Small ribosomal subunit protein bS18 (93 aa).

It belongs to the bacterial ribosomal protein bS18 family. In terms of assembly, part of the 30S ribosomal subunit. Forms a tight heterodimer with protein bS6.

Its function is as follows. Binds as a heterodimer with protein bS6 to the central domain of the 16S rRNA, where it helps stabilize the platform of the 30S subunit. In Delftia acidovorans (strain DSM 14801 / SPH-1), this protein is Small ribosomal subunit protein bS18.